We begin with the raw amino-acid sequence, 204 residues long: Pantothenate transporter PanT (204 aa).

Transmembrane regions (helical) follow at residues 18-38 (IILL…AVIV), 39-59 (GAQP…LGAR), 63-83 (FIGG…PGSI), 86-106 (LMFQ…LIIG), 123-143 (LGLG…VVLL), and 176-196 (IFEI…LVPI).

In E.coli forms a stable energy-coupling factor (ECF) transporter complex probably composed of a membrane-embedded substrate-binding protein (S component), two ATP-binding proteins (A components) and a transmembrane protein (T component).

It is found in the cell membrane. Functionally, probable pantothenate-binding protein that interacts with the energy-coupling factor (ECF) ABC-transporter complex. Unlike classic ABC transporters this ECF transporter provides the energy necessary to transport a number of different substrates. The substrates themselves are bound by transmembrane, not extracytoplasmic soluble proteins and transport it into cells. Upon coexpression with its energy-coupling factor (ECF) ABC-transporter complex EcfA1A2T in E.coli allows pantothenate uptake; uptake requires both PanT and EcfA1A2T. The polypeptide is Pantothenate transporter PanT (panT) (Leuconostoc mesenteroides subsp. mesenteroides (strain ATCC 8293 / DSM 20343 / BCRC 11652 / CCM 1803 / JCM 6124 / NCDO 523 / NBRC 100496 / NCIMB 8023 / NCTC 12954 / NRRL B-1118 / 37Y)).